Here is a 478-residue protein sequence, read N- to C-terminus: Protein nucleotidyltransferase YdiU (478 aa).

8 residues coordinate ATP: glycine 74, glycine 76, arginine 77, lysine 97, aspartate 109, glycine 110, arginine 160, and arginine 167. Aspartate 236 acts as the Proton acceptor in catalysis. 2 residues coordinate Mg(2+): asparagine 237 and aspartate 246. Aspartate 246 contacts ATP.

The protein belongs to the SELO family. The cofactor is Mg(2+). It depends on Mn(2+) as a cofactor.

The enzyme catalyses L-seryl-[protein] + ATP = 3-O-(5'-adenylyl)-L-seryl-[protein] + diphosphate. The catalysed reaction is L-threonyl-[protein] + ATP = 3-O-(5'-adenylyl)-L-threonyl-[protein] + diphosphate. It catalyses the reaction L-tyrosyl-[protein] + ATP = O-(5'-adenylyl)-L-tyrosyl-[protein] + diphosphate. It carries out the reaction L-histidyl-[protein] + UTP = N(tele)-(5'-uridylyl)-L-histidyl-[protein] + diphosphate. The enzyme catalyses L-seryl-[protein] + UTP = O-(5'-uridylyl)-L-seryl-[protein] + diphosphate. The catalysed reaction is L-tyrosyl-[protein] + UTP = O-(5'-uridylyl)-L-tyrosyl-[protein] + diphosphate. In terms of biological role, nucleotidyltransferase involved in the post-translational modification of proteins. It can catalyze the addition of adenosine monophosphate (AMP) or uridine monophosphate (UMP) to a protein, resulting in modifications known as AMPylation and UMPylation. The chain is Protein nucleotidyltransferase YdiU from Chromobacterium violaceum (strain ATCC 12472 / DSM 30191 / JCM 1249 / CCUG 213 / NBRC 12614 / NCIMB 9131 / NCTC 9757 / MK).